A 440-amino-acid chain; its full sequence is Proline--tRNA ligase (440 aa).

Belongs to the class-II aminoacyl-tRNA synthetase family. ProS type 2 subfamily. As to quaternary structure, homodimer.

The protein localises to the cytoplasm. It carries out the reaction tRNA(Pro) + L-proline + ATP = L-prolyl-tRNA(Pro) + AMP + diphosphate. In terms of biological role, catalyzes the attachment of proline to tRNA(Pro) in a two-step reaction: proline is first activated by ATP to form Pro-AMP and then transferred to the acceptor end of tRNA(Pro). In Rhizobium leguminosarum bv. trifolii (strain WSM2304), this protein is Proline--tRNA ligase.